We begin with the raw amino-acid sequence, 398 residues long: L-talarate/galactarate dehydratase (398 aa).

Residues 46–48 (DAK), 82–83 (KR), and Lys-195 each bind substrate. The active-site Proton acceptor is the Lys-197. A Mg(2+)-binding site is contributed by Asp-226. Residue Asn-228 participates in substrate binding. Positions 252 and 278 each coordinate Mg(2+). The active-site Proton donor/acceptor is His-328. Substrate is bound at residue Glu-348.

This sequence belongs to the mandelate racemase/muconate lactonizing enzyme family. Homooctamer; tetramer of dimers. Requires Mg(2+) as cofactor.

It catalyses the reaction L-altrarate = 5-dehydro-4-deoxy-D-glucarate + H2O. It carries out the reaction galactarate = 5-dehydro-4-deoxy-D-glucarate + H2O. The enzyme catalyses L-altrarate = galactarate. With respect to regulation, competitively inhibited by tartronate. In terms of biological role, catalyzes the efficient dehydration of both L-talarate (also called L-altrarate) and galactarate to 5-keto-4-deoxy-D-glucarate (5-KDG). Also catalyzes the epimerization of L-talarate to galactarate; epimerization occurs in competition with dehydration. Is required for the utilization of L-talarate as a carbon source. Also functions in galactarate utilization. Is not active on other acid sugars. This chain is L-talarate/galactarate dehydratase, found in Salmonella typhimurium (strain LT2 / SGSC1412 / ATCC 700720).